The sequence spans 150 residues: Ribonuclease pancreatic delta-type (150 aa).

The signal sequence occupies residues methionine 1 to glycine 25. Residue arginine 35 participates in substrate binding. Residue histidine 37 is the Proton acceptor of the active site. Cystine bridges form between cysteine 51–cysteine 110, cysteine 65–cysteine 121, cysteine 83–cysteine 136, and cysteine 90–cysteine 98. Residues lysine 66–threonine 70, lysine 91, and arginine 111 each bind substrate. Histidine 145 functions as the Proton donor in the catalytic mechanism.

It belongs to the pancreatic ribonuclease family. In terms of assembly, monomer.

It is found in the secreted. The enzyme catalyses an [RNA] containing cytidine + H2O = an [RNA]-3'-cytidine-3'-phosphate + a 5'-hydroxy-ribonucleotide-3'-[RNA].. The catalysed reaction is an [RNA] containing uridine + H2O = an [RNA]-3'-uridine-3'-phosphate + a 5'-hydroxy-ribonucleotide-3'-[RNA].. Functionally, endonuclease that catalyzes the cleavage of RNA on the 3' side of pyrimidine nucleotides. Acts on single-stranded and double-stranded RNA. This is Ribonuclease pancreatic delta-type from Rattus exulans (Polynesian rat).